A 523-amino-acid chain; its full sequence is Cytochrome P450 52A3-B (523 aa).

A helical transmembrane segment spans residues 17–34 (WYTILFGAAFTYFLSIAL). Cysteine 471 serves as a coordination point for heme.

This sequence belongs to the cytochrome P450 family. Heme serves as cofactor.

The protein localises to the membrane. Its function is as follows. Together with an NADPH cytochrome P450 the enzyme system catalyzes the terminal hydroxylation as the first step in the assimilation of alkanes and fatty acids. This Candida maltosa (Yeast) protein is Cytochrome P450 52A3-B (CYP52A3-B).